Here is a 612-residue protein sequence, read N- to C-terminus: UvrABC system protein C (612 aa).

Positions 18–96 (TRPGVYRMMD…IKTLKPPYNI (79 aa)) constitute a GIY-YIG domain. The 36-residue stretch at 208–243 (PEIINETIQQMEVASAQLDFERAAVLRDQVDYLRRV) folds into the UVR domain.

It belongs to the UvrC family. As to quaternary structure, interacts with UvrB in an incision complex.

It localises to the cytoplasm. The UvrABC repair system catalyzes the recognition and processing of DNA lesions. UvrC both incises the 5' and 3' sides of the lesion. The N-terminal half is responsible for the 3' incision and the C-terminal half is responsible for the 5' incision. The sequence is that of UvrABC system protein C from Hahella chejuensis (strain KCTC 2396).